The primary structure comprises 670 residues: G-protein coupled receptor moody (670 aa).

The Extracellular segment spans residues 1 to 40 (MSDETTISLEDGYPPLEALTTMVPPADATGFSQSLLTFAA). Residues 41–61 (VMTFLIMIVGICGNLLTVVAL) form a helical membrane-spanning segment. The Cytoplasmic segment spans residues 62–69 (LKCPKVRN). Residues 70–90 (VAAAFIISLCIADLLFCALVL) form a helical membrane-spanning segment. Topologically, residues 91 to 111 (PFQGLRFVQGTWRHGQVLCRL) are extracellular. The cysteines at positions 109 and 188 are disulfide-linked. The chain crosses the membrane as a helical span at residues 112–132 (IPFIQYGNIGVSLLCIAMITI). Residues 133-152 (NRYVMITHHGLYARIYKRHW) lie on the Cytoplasmic side of the membrane. A helical transmembrane segment spans residues 153–173 (IAVMIAACWLFSYGMQLPTLL). The Extracellular portion of the chain corresponds to 174 to 202 (GEWGRFGYDSRLQTCSIMTDDHGHSSKTT). The chain crosses the membrane as a helical span at residues 203-223 (LFITAFVIPCLVIIACYAKIF). The Cytoplasmic segment spans residues 224–313 (WVVHKSEQRL…AKRNEWRITK (90 aa)). The interval 258–302 (LPSGAECQPSNRVSSDSSSSFSIDVPETAPSGKQQPTRVKDQREV) is disordered. Positions 267-279 (SNRVSSDSSSSFS) are enriched in low complexity. Residues 314 to 334 (MVLAIFLSFVVCYLPITIVKV) form a helical membrane-spanning segment. Residues 335–345 (ADKNVEHPSLH) lie on the Extracellular side of the membrane. A helical transmembrane segment spans residues 346 to 366 (ICSYILLYLSACINPIIYVIM). Topologically, residues 367–670 (NKQYRKAYKT…LTAKMKFPKD (304 aa)) are cytoplasmic. Disordered regions lie at residues 461–490 (DLIS…GSNS), 562–622 (ELPP…YMNV), and 636–670 (TNAV…FPKD). Residues 564-584 (PPTPPATSAPTTPAPPPPSSP) show a composition bias toward pro residues. The segment covering 585-598 (LHPLSTDSSTTTIS) has biased composition (low complexity). Over residues 646 to 660 (GPANTSATVSISGSK) the composition is skewed to polar residues.

The protein belongs to the G-protein coupled receptor 1 family. As to expression, isoform A and isoform B are expressed in the head. Isoform B only is expressed in the body. Expressed in embryonic glial cells that are involved in ensheathment and insulation of the nervous system. Both isoforms are expressed in glia that insulate the larval and adult nervous system. Also expressed in the germ cells, the gut, and the heart.

It is found in the cell membrane. Functionally, isoform A and isoform B are required in glia to regulate the acute sensitivity to cocaine and to continuously maintain the proper blood-brain barrier (BBB) function. A moody-mediated signaling pathway functions in glia to regulate nervous system insulation and drug-related behaviors. Galphai and Galphao, and the regulator of G protein signaling, loco, are required in the surface glia to achieve effective insulation. The components function by regulating the cortical actin and thereby stabilizing the extended morphology of the surface glia, which in turn is necessary for the formation of septate junctions of sufficient length to achieve proper sealing of the nerve cord. The polypeptide is G-protein coupled receptor moody (Drosophila melanogaster (Fruit fly)).